The sequence spans 1024 residues: Multidrug resistance protein MdtC (1024 aa).

11 consecutive transmembrane segments (helical) span residues 15 to 35, 333 to 353, 360 to 380, 387 to 407, 431 to 451, 463 to 483, 528 to 548, 853 to 873, 897 to 917, 953 to 973, and 984 to 1004; these read WLLT…LPVA, EVEQ…FAFL, LIPA…MYLC, LSLM…IVVL, VGFT…PLLL, FAIT…TLTP, WGLL…ISIP, LWLI…LYES, LFNA…IGIV, PIIM…LGSG, and ITIV…TPVV.

Belongs to the resistance-nodulation-cell division (RND) (TC 2.A.6) family. MdtC subfamily. Part of a tripartite efflux system composed of MdtA, MdtB and MdtC. MdtC forms a heteromultimer with MdtB.

It localises to the cell inner membrane. This chain is Multidrug resistance protein MdtC, found in Erwinia tasmaniensis (strain DSM 17950 / CFBP 7177 / CIP 109463 / NCPPB 4357 / Et1/99).